A 715-amino-acid polypeptide reads, in one-letter code: Polyribonucleotide nucleotidyltransferase (715 aa).

2 residues coordinate Mg(2+): Asp-493 and Asp-499. The KH domain maps to 560 to 619; that stretch reads PRMITIKINPEKIRDVIGKGGSVIRALTEETGTTIDISDDGVVTIASTSSEGMAEAKKRI. The S1 motif domain occupies 629–697; it reads GQVYEGTVLK…EKGRVRLSAK (69 aa).

The protein belongs to the polyribonucleotide nucleotidyltransferase family. Requires Mg(2+) as cofactor.

The protein resides in the cytoplasm. The catalysed reaction is RNA(n+1) + phosphate = RNA(n) + a ribonucleoside 5'-diphosphate. Functionally, involved in mRNA degradation. Catalyzes the phosphorolysis of single-stranded polyribonucleotides processively in the 3'- to 5'-direction. This is Polyribonucleotide nucleotidyltransferase from Burkholderia multivorans (strain ATCC 17616 / 249).